Consider the following 1053-residue polypeptide: Mediator of RNA polymerase II transcription subunit 16 (1053 aa).

A disordered region spans residues 139–170 (KTEGNTEKNKDTKQIGNGSGTNGHGDSPINTP). Residues 142–151 (GNTEKNKDTK) show a composition bias toward basic and acidic residues.

Belongs to the Mediator complex subunit 16 family. As to quaternary structure, component of the Mediator complex.

It localises to the nucleus. Its function is as follows. Component of the Mediator complex, a coactivator involved in the regulated transcription of nearly all RNA polymerase II-dependent genes. Mediator functions as a bridge to convey information from gene-specific regulatory proteins to the basal RNA polymerase II transcription machinery. Mediator is recruited to promoters by direct interactions with regulatory proteins and serves as a scaffold for the assembly of a functional preinitiation complex with RNA polymerase II and the general transcription factors. The polypeptide is Mediator of RNA polymerase II transcription subunit 16 (SIN4) (Candida albicans (strain SC5314 / ATCC MYA-2876) (Yeast)).